Here is a 212-residue protein sequence, read N- to C-terminus: Eukaryotic translation initiation factor 4E-4 (212 aa).

The cysteines at positions 143 and 147 are disulfide-linked.

The protein belongs to the eukaryotic initiation factor 4E family. In terms of assembly, eIF4F is a multi-subunit complex, the composition of which varies with external and internal environmental conditions. It is composed of at least eIF4A, eIF4E and eIF4G. eIF4E is also known to interact with other partners. As to expression, enriched in somatic cells.

Recognizes and binds the 7-methylguanosine-containing mRNA cap during an early step in the initiation of protein synthesis and facilitates ribosome binding by inducing the unwinding of the mRNAs secondary structures. All 5 eIF4E proteins bind monomethyl cap structures. Only ife-1, ife-2 and ife-5 bind trimethyl cap structures which result from trans-splicing. Translation of trimethyl cap structure mRNAs may be regulated by intracellular redox state; disulfide bonds change the width and depth of the cap-binding cavity determining selectivity to mRNA caps. This is Eukaryotic translation initiation factor 4E-4 (ife-4) from Caenorhabditis elegans.